A 241-amino-acid polypeptide reads, in one-letter code: Polyol phosphate phosphatase PYP1 (241 aa).

D9 functions as the Nucleophile in the catalytic mechanism. Positions 9, 11, and 179 each coordinate Mg(2+). D11 functions as the Proton donor in the catalytic mechanism.

Belongs to the HAD-like hydrolase superfamily. The cofactor is Mg(2+).

Its subcellular location is the cytoplasm. The protein resides in the nucleus. The catalysed reaction is D-ribitol 5-phosphate + H2O = ribitol + phosphate. It catalyses the reaction D-sorbitol 6-phosphate + H2O = D-sorbitol + phosphate. The enzyme catalyses sn-glycerol 1-phosphate + H2O = glycerol + phosphate. It carries out the reaction D-erythrose 4-phosphate + H2O = D-erythrose + phosphate. Its function is as follows. Hydrolyzes sugar alcohol (polyol) phosphates. Dephosphorylates a variety of substrates, including: sn-glycerol 1-phosphate (D-glycerol 3-phosphate), D-ribitol 5-phosphate, D-sorbitol 6-phosphate (D-glucitol 6-phosphate), and D-erythrose 4-phosphate. Prevents accumulation of toxic levels of polyol phosphates, which can impair glycolysis by inhibiting glucose-6-phosphate isomerase. The chain is Polyol phosphate phosphatase PYP1 from Saccharomyces cerevisiae (strain ATCC 204508 / S288c) (Baker's yeast).